The primary structure comprises 440 residues: Transposon Ty1-BR Gag polyprotein (440 aa).

3 stretches are compositionally biased toward polar residues: residues Met-1 to Pro-10, Thr-48 to Ser-60, and Gln-127 to Phe-152. Disordered stretches follow at residues Met-1 to Gln-93, Pro-126 to Pro-173, and Gly-352 to Tyr-440. The span at Thr-153 to Thr-165 shows a compositional bias: low complexity. The interval Asn-299 to His-401 is RNA-binding. Low complexity predominate over residues Asn-402–Ser-418. A Phosphoserine modification is found at Ser-416. Residues Lys-419–Asn-428 show a composition bias toward polar residues. A compositionally biased stretch (basic and acidic residues) spans Asn-429–Tyr-440.

Homotrimer.

It localises to the cytoplasm. Capsid protein (CA) is the structural component of the virus-like particle (VLP), forming the shell that encapsulates the retrotransposons dimeric RNA genome. The particles are assembled from trimer-clustered units and there are holes in the capsid shells that allow for the diffusion of macromolecules. CA also has nucleocapsid-like chaperone activity, promoting primer tRNA(i)-Met annealing to the multipartite primer-binding site (PBS), dimerization of Ty1 RNA and initiation of reverse transcription. In Saccharomyces cerevisiae (strain ATCC 204508 / S288c) (Baker's yeast), this protein is Transposon Ty1-BR Gag polyprotein (TY1A-BR).